Consider the following 617-residue polypeptide: Protein fem-1 homolog C (617 aa).

Residue Met-1 is modified to N-acetylmethionine. 7 ANK repeats span residues 2–31 (DLKT…KEEV), 40–70 (NGAT…SIEV), 82–111 (EGAP…SVNN), 115–144 (TNST…DLEV), 148–177 (HGHT…DVNR), 181–210 (KGNT…KMEK), and 213–242 (YGMT…TSKT). TPR repeat units lie at residues 245 to 279 (INAL…RYSD) and 338 to 371 (SYYI…QQSN). ANK repeat units follow at residues 481–523 (NNFS…DVNV) and 527–556 (DDNS…HFDA).

It belongs to the fem-1 family. As to quaternary structure, component of a Cul2-RING (CRL2) E3 ubiquitin-protein ligase complex, also named ECS (Elongin BC-CUL2/5-SOCS-box protein) complex, composed of CUL2, Elongin BC (ELOB and ELOC), RBX1 and substrate-specific adapter FEM1C. As to expression, widely expressed. Highly expressed in kidney, cardiac tissue, skeletal muscle and testis. Expressed at lower levels in other tissues, including cartilage.

The protein operates within protein modification; protein ubiquitination. Its function is as follows. Substrate-recognition component of a Cul2-RING (CRL2) E3 ubiquitin-protein ligase complex of the DesCEND (destruction via C-end degrons) pathway, which recognizes a C-degron located at the extreme C terminus of target proteins, leading to their ubiquitination and degradation. The C-degron recognized by the DesCEND pathway is usually a motif of less than ten residues and can be present in full-length proteins, truncated proteins or proteolytically cleaved forms. The CRL2(FEM1C) complex specifically recognizes proteins with an arginine at the C-terminus: recognizes and binds proteins ending with -Lys/Arg-Xaa-Arg and -Lys/Arg-Xaa-Xaa-Arg C-degrons, such as SIL1 or OR51B2, leading to their ubiquitination and degradation. The CRL2(FEM1C) complex mediates ubiquitination and degradation of truncated MSRB1/SEPX1 selenoproteins produced by failed UGA/Sec decoding. Promotes ubiquitination and degradation of SLBP. The polypeptide is Protein fem-1 homolog C (Homo sapiens (Human)).